A 257-amino-acid chain; its full sequence is Acetylglutamate kinase (257 aa).

Residues 41-42 (GG), arginine 63, and asparagine 155 contribute to the substrate site.

This sequence belongs to the acetylglutamate kinase family. ArgB subfamily.

The protein resides in the cytoplasm. It carries out the reaction N-acetyl-L-glutamate + ATP = N-acetyl-L-glutamyl 5-phosphate + ADP. The protein operates within amino-acid biosynthesis; L-arginine biosynthesis; N(2)-acetyl-L-ornithine from L-glutamate: step 2/4. Functionally, catalyzes the ATP-dependent phosphorylation of N-acetyl-L-glutamate. In Solibacter usitatus (strain Ellin6076), this protein is Acetylglutamate kinase.